The chain runs to 89 residues: DNA-directed RNA polymerase subunit omega (89 aa).

Belongs to the RNA polymerase subunit omega family. In terms of assembly, the RNAP catalytic core consists of 2 alpha, 1 beta, 1 beta' and 1 omega subunit. When a sigma factor is associated with the core the holoenzyme is formed, which can initiate transcription.

It carries out the reaction RNA(n) + a ribonucleoside 5'-triphosphate = RNA(n+1) + diphosphate. In terms of biological role, promotes RNA polymerase assembly. Latches the N- and C-terminal regions of the beta' subunit thereby facilitating its interaction with the beta and alpha subunits. The protein is DNA-directed RNA polymerase subunit omega of Idiomarina loihiensis (strain ATCC BAA-735 / DSM 15497 / L2-TR).